The chain runs to 395 residues: MVVFSKVTAVVVGLSTIVSAVPVVQPRKGFTINQVARPVTNKKTVNLPAVYANALTKYGGTVPDSVKAAASSGSAVTTPEQYDSEYLTPVKVGGTTLNLDFDTGSADLWVFSSELSASQSSGHAIYKPSANAQKLNGYTWKIQYGDGSSASGDVYKDTVTVGGVTAQSQAVEAASHISSQFVQDKDNDGLLGLAFSSINTVSPRPQTTFFDTVKSQLDSPLFAVTLKYHAPGTYDFGYIDNSKFQGELTYTDVDSSQGFWMFTADGYGVGNGAPNSNSISGIADTGTTLLLLDDSVVADYYRQVSGAKNSNQYGGYVFPCSTKLPSFTTVIGGYNAVVPGEYINYAPVTDGSSTCYGGIQSNSGLGFSIFGDIFLKSQYVVFDSQGPRLGFAPQA.

An N-terminal signal peptide occupies residues 1–20 (MVVFSKVTAVVVGLSTIVSA). Residues 21-70 (VPVVQPRKGFTINQVARPVTNKKTVNLPAVYANALTKYGGTVPDSVKAAA) constitute a propeptide, activation peptide. The Peptidase A1 domain occupies 86–392 (YLTPVKVGGT…DSQGPRLGFA (307 aa)). Catalysis depends on residues aspartate 102 and aspartate 284. Cysteines 320 and 355 form a disulfide.

It belongs to the peptidase A1 family. As to quaternary structure, monomer.

Its subcellular location is the secreted. The enzyme catalyses Hydrolysis of proteins with broad specificity. Generally favors hydrophobic residues in P1 and P1', but also accepts Lys in P1, which leads to activation of trypsinogen. Does not clot milk.. Its function is as follows. Secreted aspartic endopeptidase that allows assimilation of proteinaceous substrates. The scissile peptide bond is attacked by a nucleophilic water molecule activated by two aspartic residues in the active site. Shows a broad primary substrate specificity. Favors hydrophobic residues at the P1 and P1' positions, but also accepts a lysine residue in the P1 position, leading to the activation of trypsinogen and chymotrypsinogen A. This is Aspergillopepsin-1 (pepA) from Aspergillus fumigatus (strain CBS 144.89 / FGSC A1163 / CEA10) (Neosartorya fumigata).